The sequence spans 64 residues: Antimicrobial peptide 1 (64 aa).

Positions 1 to 26 are cleaved as a signal peptide; that stretch reads MAKVSSSLLKFAIVLILVLSMSAIIS. 3 disulfide bridges follow: Cys-29–Cys-46, Cys-36–Cys-50, and Cys-45–Cys-61.

It belongs to the AMP family.

It is found in the secreted. In terms of biological role, possesses antifungal and antibacterial activity. The chain is Antimicrobial peptide 1 from Mesembryanthemum crystallinum (Common ice plant).